A 226-amino-acid chain; its full sequence is Glutathione peroxidase 3 (226 aa).

The first 24 residues, 1–24 (MARLLQASCLLSLLLAGFLPQSRG), serve as a signal peptide directing secretion. Residue Sec73 is part of the active site. Sec73 is a non-standard amino acid (selenocysteine).

This sequence belongs to the glutathione peroxidase family. In terms of assembly, homotetramer. In terms of tissue distribution, secreted in plasma.

The protein resides in the secreted. The enzyme catalyses 2 glutathione + H2O2 = glutathione disulfide + 2 H2O. It catalyses the reaction tert-butyl hydroperoxide + 2 glutathione = tert-butanol + glutathione disulfide + H2O. In terms of biological role, protects cells and enzymes from oxidative damage, by catalyzing the reduction of hydrogen peroxide, lipid peroxides and organic hydroperoxide, by glutathione. The polypeptide is Glutathione peroxidase 3 (Sapajus apella (Brown-capped capuchin)).